A 177-amino-acid polypeptide reads, in one-letter code: Large ribosomal subunit protein uL6 (177 aa).

This sequence belongs to the universal ribosomal protein uL6 family. In terms of assembly, part of the 50S ribosomal subunit.

This protein binds to the 23S rRNA, and is important in its secondary structure. It is located near the subunit interface in the base of the L7/L12 stalk, and near the tRNA binding site of the peptidyltransferase center. The sequence is that of Large ribosomal subunit protein uL6 from Azoarcus sp. (strain BH72).